A 208-amino-acid polypeptide reads, in one-letter code: Thymidylate kinase (208 aa).

ATP is bound at residue Gly-10–Thr-17.

It belongs to the thymidylate kinase family.

It catalyses the reaction dTMP + ATP = dTDP + ADP. In terms of biological role, phosphorylation of dTMP to form dTDP in both de novo and salvage pathways of dTTP synthesis. This is Thymidylate kinase from Caldanaerobacter subterraneus subsp. tengcongensis (strain DSM 15242 / JCM 11007 / NBRC 100824 / MB4) (Thermoanaerobacter tengcongensis).